The primary structure comprises 718 residues: Sodium/myo-inositol cotransporter (718 aa).

The Extracellular segment spans residues 1–9 (MRAVLETAD). The helical transmembrane segment at 10-29 (IAIVALYFILVMCIGFFAMW) threads the bilayer. At 30–38 (KSNRSTVSG) the chain is on the cytoplasmic side. A helical transmembrane segment spans residues 39-57 (YFLAGRSMTWVAIGASLFV). Topologically, residues 58 to 86 (SNIGSEHFIGLAGSGAASGFAVGAWEFNA) are extracellular. A helical membrane pass occupies residues 87–110 (LLLLQLLGWVFIPIYIRSGVYTMP). The Cytoplasmic portion of the chain corresponds to 111–123 (EYLSKRFGGHRIQ). The chain crosses the membrane as a helical span at residues 124–144 (VYFAALSLILYIFTKLSVDLY). Residues 145–157 (SGALFIQESLGWN) are Extracellular-facing. Residues 158 to 183 (LYVSVILLIGMTALLTVTGGLVAVIY) traverse the membrane as a helical segment. Residues 184-186 (TDT) lie on the Cytoplasmic side of the membrane. A helical transmembrane segment spans residues 187 to 205 (LQALLMIVGALTLMIISMM). Residues 206-303 (EIGGFEEVKR…HAKGSTLMAG (98 aa)) are Extracellular-facing. Asn232 carries an N-linked (GlcNAc...) asparagine glycan. The helical transmembrane segment at 304-324 (FLKLLPMFIIVVPGMISRILF) threads the bilayer. Over 325-353 (ADDIACINPEHCMQVCGSRAGCSNIAYPR) the chain is Cytoplasmic. A helical membrane pass occupies residues 354–376 (LVMKLVPVGLRGLMMAVMIAALM). Topologically, residues 377-406 (SDLDSIFNSASTIFTLDVYKLIRRSASSRE) are extracellular. The chain crosses the membrane as a helical span at residues 407 to 430 (LMIVGRIFVAFMVVISIAWVPIIV). The Cytoplasmic segment spans residues 431–443 (EMQGGQMYLYIQE). The helical transmembrane segment at 444–462 (VADYLTPPVAALFLLAIFW) threads the bilayer. Topologically, residues 463 to 510 (KRCNEQGAFYGGMAGFVLGAVRLTLAFAYRAPECDQPDNRPGFIKDIH) are extracellular. Residues 511 to 532 (YMYVATALFWVTGLITVIVSLL) form a helical membrane-spanning segment. The Cytoplasmic portion of the chain corresponds to 533–695 (TPPPTKEQIR…QMLEEPPQVK (163 aa)). Residues Ser594 and Ser632 each carry the phosphoserine modification. The helical transmembrane segment at 696 to 716 (LILNIGLFAVCSLGIFMFVYF) threads the bilayer. The Extracellular portion of the chain corresponds to 717-718 (SL).

Belongs to the sodium:solute symporter (SSF) (TC 2.A.21) family. Interacts with KCNQ2 (via the pore module). Interacts with KCNQ1; this interaction is direct. Forms coregulatory complexes with ion channels KCNQ2-KCNQ3 and KCNQ1-KCNE2. Kidney cortex and medulla.

The protein resides in the apical cell membrane. The protein localises to the basolateral cell membrane. The catalysed reaction is myo-inositol(out) + 2 Na(+)(out) = myo-inositol(in) + 2 Na(+)(in). The enzyme catalyses scyllo-inositol(out) + 2 Na(+)(out) = scyllo-inositol(in) + 2 Na(+)(in). Inhibited by phlorizin and phloretin. Functionally, electrogenic Na(+)-coupled sugar symporter that actively transports myo-inositol and its stereoisomer scyllo-inositol across the plasma membrane, with a Na(+) to sugar coupling ratio of 2:1. Maintains myo-inositol concentration gradient that defines cell volume and fluid balance during osmotic stress, in particular in the fetoplacental unit and central nervous system. Forms coregulatory complexes with voltage-gated K(+) ion channels, allosterically altering ion selectivity, voltage dependence and gating kinetics of the channel. In turn, K(+) efflux through the channel forms a local electrical gradient that modulates electrogenic Na(+)-coupled myo-inositol influx through the transporter. Associates with KCNQ1-KCNE2 channel in the apical membrane of choroid plexus epithelium and regulates the myo-inositol gradient between blood and cerebrospinal fluid with an impact on neuron excitability. Associates with KCNQ2-KCNQ3 channel altering ion selectivity, increasing Na(+) and Cs(+) permeation relative to K(+) permeation. Provides myo-inositol precursor for biosynthesis of phosphoinositides such as PI(4,5)P2, thus indirectly affecting the activity of phosphoinositide-dependent ion channels and Ca(2+) signaling upon osmotic stress. Has very low affinity for sugars such as L-fucose and L-xylose, with an affinity about three orders of magnitude lower than myo-inositol. The protein is Sodium/myo-inositol cotransporter (SLC5A3) of Canis lupus familiaris (Dog).